We begin with the raw amino-acid sequence, 1403 residues long: DNA-directed RNA polymerase subunit beta' (1403 aa).

Positions 71, 73, 86, and 89 each coordinate Zn(2+). Positions 462, 464, and 466 each coordinate Mg(2+). Zn(2+) contacts are provided by Cys-820, Cys-893, Cys-900, and Cys-903.

This sequence belongs to the RNA polymerase beta' chain family. As to quaternary structure, the RNAP catalytic core consists of 2 alpha, 1 beta, 1 beta' and 1 omega subunit. When a sigma factor is associated with the core the holoenzyme is formed, which can initiate transcription. Mg(2+) is required as a cofactor. It depends on Zn(2+) as a cofactor.

It carries out the reaction RNA(n) + a ribonucleoside 5'-triphosphate = RNA(n+1) + diphosphate. DNA-dependent RNA polymerase catalyzes the transcription of DNA into RNA using the four ribonucleoside triphosphates as substrates. This is DNA-directed RNA polymerase subunit beta' from Methylobacterium radiotolerans (strain ATCC 27329 / DSM 1819 / JCM 2831 / NBRC 15690 / NCIMB 10815 / 0-1).